The sequence spans 118 residues: Ribosome-binding factor A (118 aa).

It belongs to the RbfA family. As to quaternary structure, monomer. Binds 30S ribosomal subunits, but not 50S ribosomal subunits or 70S ribosomes.

Its subcellular location is the cytoplasm. In terms of biological role, one of several proteins that assist in the late maturation steps of the functional core of the 30S ribosomal subunit. Associates with free 30S ribosomal subunits (but not with 30S subunits that are part of 70S ribosomes or polysomes). Required for efficient processing of 16S rRNA. May interact with the 5'-terminal helix region of 16S rRNA. This is Ribosome-binding factor A from Shouchella clausii (strain KSM-K16) (Alkalihalobacillus clausii).